A 304-amino-acid chain; its full sequence is DDRGK domain-containing protein 1 (304 aa).

Topologically, residues 1–2 are lumenal; that stretch reads MD. Residues 3 to 23 traverse the membrane as a helical segment; it reads LIILVGIAIALLVVIISLYLL. The Cytoplasmic segment spans residues 24–304; it reads QKKNSTTEAK…LTPVSAEGSS (281 aa). Positions 31 to 174 are disordered; it reads EAKPAAAAPQ…AERLAKEERE (144 aa). Residues 53–82 show a composition bias toward low complexity; that stretch reads RRAQIARNQRNRLRQNAPVAAAAPQAEAPA. Residues 105–174 are compositionally biased toward basic and acidic residues; that stretch reads LDEKMGAKKR…AERLAKEERE (70 aa).

It belongs to the DDRGK1 family. In terms of assembly, interacts with Atg9; the interaction is transient.

It is found in the endoplasmic reticulum membrane. Functionally, substrate adapter for ufmylation, the covalent attachment of the ubiquitin-like modifier UFM1 to substrate proteins. Required for ufmylation of Atg9; protects the nervous system during aging, possibly by stabilizing Atg9 and supporting its function. This Drosophila ananassae (Fruit fly) protein is DDRGK domain-containing protein 1.